The chain runs to 336 residues: Glyceraldehyde-3-phosphate dehydrogenase (336 aa).

Residues 12–13 (RI), Asp34, Arg78, and Thr121 each bind NAD(+). D-glyceraldehyde 3-phosphate-binding positions include 151–153 (SCT), Thr182, Arg199, 212–213 (TG), and Arg235. Catalysis depends on Cys152, which acts as the Nucleophile. Asn316 contacts NAD(+).

The protein belongs to the glyceraldehyde-3-phosphate dehydrogenase family. As to quaternary structure, homotetramer.

The protein resides in the cytoplasm. The catalysed reaction is D-glyceraldehyde 3-phosphate + phosphate + NAD(+) = (2R)-3-phospho-glyceroyl phosphate + NADH + H(+). Its pathway is carbohydrate degradation; glycolysis; pyruvate from D-glyceraldehyde 3-phosphate: step 1/5. Functionally, catalyzes the oxidative phosphorylation of glyceraldehyde 3-phosphate (G3P) to 1,3-bisphosphoglycerate (BPG) using the cofactor NAD. The first reaction step involves the formation of a hemiacetal intermediate between G3P and a cysteine residue, and this hemiacetal intermediate is then oxidized to a thioester, with concomitant reduction of NAD to NADH. The reduced NADH is then exchanged with the second NAD, and the thioester is attacked by a nucleophilic inorganic phosphate to produce BPG. This is Glyceraldehyde-3-phosphate dehydrogenase (gap) from Streptococcus pyogenes serotype M3 (strain ATCC BAA-595 / MGAS315).